Consider the following 114-residue polypeptide: Flagellar hook-basal body complex protein FliE (114 aa).

The protein belongs to the FliE family.

The protein localises to the bacterial flagellum basal body. The polypeptide is Flagellar hook-basal body complex protein FliE (Desulfitobacterium hafniense (strain DSM 10664 / DCB-2)).